A 311-amino-acid chain; its full sequence is Methionyl-tRNA formyltransferase (311 aa).

112–115 is a (6S)-5,6,7,8-tetrahydrofolate binding site; that stretch reads SLLP.

This sequence belongs to the Fmt family.

The catalysed reaction is L-methionyl-tRNA(fMet) + (6R)-10-formyltetrahydrofolate = N-formyl-L-methionyl-tRNA(fMet) + (6S)-5,6,7,8-tetrahydrofolate + H(+). Attaches a formyl group to the free amino group of methionyl-tRNA(fMet). The formyl group appears to play a dual role in the initiator identity of N-formylmethionyl-tRNA by promoting its recognition by IF2 and preventing the misappropriation of this tRNA by the elongation apparatus. This Bartonella henselae (strain ATCC 49882 / DSM 28221 / CCUG 30454 / Houston 1) (Rochalimaea henselae) protein is Methionyl-tRNA formyltransferase.